Here is a 415-residue protein sequence, read N- to C-terminus: Protein maelstrom homolog (415 aa).

Residues 4-73 (KKAARNAYFF…DPDSTSTYND (70 aa)) constitute a DNA-binding region (HMG box). Residues 367-399 (SSDPKYSTDKSERSSFEPRGVKPYQGPSGGGRG) form a disordered region. Basic and acidic residues predominate over residues 372–386 (YSTDKSERSSFEPRG).

It belongs to the maelstrom family.

The protein resides in the cytoplasm. It is found in the nucleus. Functionally, plays a central role during spermatogenesis by repressing transposable elements and preventing their mobilization, which is essential for the germline integrity. Acts via the piRNA metabolic process, which mediates the repression of transposable elements during meiosis by forming complexes composed of piRNAs and Piwi proteins and governs the methylation and subsequent repression of transposons. Its association with piP-bodies suggests a participation in the secondary piRNAs metabolic process. Required for the localization of germ-cell factors to the meiotic nuage. The sequence is that of Protein maelstrom homolog (mael) from Xenopus tropicalis (Western clawed frog).